A 352-amino-acid chain; its full sequence is tRNA-specific 2-thiouridylase MnmA (352 aa).

ATP is bound at residue 6–13 (AVSGGTDS). Residue Cys-92 is the Nucleophile of the active site. A disulfide bridge connects residues Cys-92 and Cys-189. Gly-116 serves as a coordination point for ATP. An interaction with tRNA region spans residues 139–141 (KDQ). Cys-189 (cysteine persulfide intermediate) is an active-site residue. Residues 294–295 (RY) are interaction with tRNA.

The protein belongs to the MnmA/TRMU family.

Its subcellular location is the cytoplasm. The enzyme catalyses S-sulfanyl-L-cysteinyl-[protein] + uridine(34) in tRNA + AH2 + ATP = 2-thiouridine(34) in tRNA + L-cysteinyl-[protein] + A + AMP + diphosphate + H(+). In terms of biological role, catalyzes the 2-thiolation of uridine at the wobble position (U34) of tRNA, leading to the formation of s(2)U34. This chain is tRNA-specific 2-thiouridylase MnmA, found in Lawsonia intracellularis (strain PHE/MN1-00).